Here is a 1272-residue protein sequence, read N- to C-terminus: CST complex subunit CTC1 (1272 aa).

It belongs to the CTC1 family. In terms of assembly, component of the CST complex, composed of CTC1, TEN1 and STN1. Interacts with POT1A.

It localises to the nucleus. The protein resides in the chromosome. The protein localises to the telomere. Its function is as follows. Component of the CST complex, a complex that binds to single-stranded DNA and is required to protect telomeres from DNA degradation. The CST complex binds single-stranded DNA with high affinity in a sequence-independent manner, while isolated subunits bind DNA with low affinity by themselves. Associates with enzymatically active telomerase. In Arabidopsis thaliana (Mouse-ear cress), this protein is CST complex subunit CTC1.